Reading from the N-terminus, the 345-residue chain is Protein RecA (345 aa).

ATP is bound at residue 65 to 72 (GPESSGKT).

It belongs to the RecA family.

The protein localises to the cytoplasm. Can catalyze the hydrolysis of ATP in the presence of single-stranded DNA, the ATP-dependent uptake of single-stranded DNA by duplex DNA, and the ATP-dependent hybridization of homologous single-stranded DNAs. It interacts with LexA causing its activation and leading to its autocatalytic cleavage. This is Protein RecA from Sulfurimonas denitrificans (strain ATCC 33889 / DSM 1251) (Thiomicrospira denitrificans (strain ATCC 33889 / DSM 1251)).